The sequence spans 60 residues: Mastoparan-A (60 aa).

The first 27 residues, 1 to 27 (MKNTILILFTAFIALLGFFGMSAEALA), serve as a signal peptide directing secretion. AXPX repeat units lie at residues 27–30 (ADPI), 31–34 (ADPL), 35–38 (AGPN), and 41–43 (ADP). Positions 28–45 (DPIADPLAGPNAEADPEA) are excised as a propeptide. Position 59 is an isoleucine amide (Ile-59).

This sequence belongs to the MCD family. Mastoparan subfamily. As to expression, expressed by the venom gland.

The protein resides in the secreted. It is found in the target cell membrane. Its function is as follows. Antimicrobial and mast cell degranulating peptide. Has broad spectrum antibacterial activity against both Gram-positive and Gram-negative bacteria (S.aureus MIC=32-64 ug/ml, S.xylosus MIC=2 ug/ml, S.alactolyticus MIC=12 ug/ml, C.koseri MIC=4 ug/ml, E.coli MIC=8 ug/ml, K.pneumoniae MIC=32 ug/ml, P.aerugiosa MIC=192 ug/ml, S.choleraesuis MIC=32 ug/ml, S.typhimurium MIC=32 ug/ml, V.parahamelytics MIC=16 ug/ml). Affects membrane permeability of E.coli. Shows hemolytic activities on sheep, chicken and human erythrocytes. Its mast cell degranulation activity may be related to the activation of G-protein coupled receptors in mast cells as well as interaction with other proteins located in cell endosomal membranes in the mast cells. In Vespa analis (Yellow-vented hornet), this protein is Mastoparan-A.